Consider the following 415-residue polypeptide: Small ribosomal subunit protein uS5m (415 aa).

The segment at 1 to 31 (MRRSGPELWKTLTSVSKSGQKKGRRNTRQPV) is disordered. The S5 DRBM domain occupies 131-197 (FETYCLEVKR…GMASRKIFHV (67 aa)). The interval 396 to 415 (GVEPMPLGIGLSHVVPKKDD) is disordered.

The protein belongs to the universal ribosomal protein uS5 family. In terms of assembly, component of the mitochondrial ribosome small subunit (28S) which comprises a 12S rRNA and about 30 distinct proteins.

It is found in the mitochondrion. The protein is Small ribosomal subunit protein uS5m (mrps-5) of Caenorhabditis briggsae.